Consider the following 300-residue polypeptide: Cation-efflux pump FieF (300 aa).

4 helical membrane-spanning segments follow: residues 12 to 32, 39 to 59, 82 to 102, and 114 to 134; these read AAIA…FAWW, ILAA…NLLV, AALA…LTSI, and PGVG…LVTF. Residues Asp-45 and Asp-49 each contribute to the Zn(2+) site. Zn(2+)-binding residues include His-153 and Asp-157. The next 2 helical transmembrane spans lie at 156–176 and 178–198; these read SDVM…YGWH and ADAL…LRMG.

This sequence belongs to the cation diffusion facilitator (CDF) transporter (TC 2.A.4) family. FieF subfamily. In terms of assembly, homodimer.

It localises to the cell inner membrane. It catalyses the reaction Zn(2+)(in) + H(+)(out) = Zn(2+)(out) + H(+)(in). The catalysed reaction is Cd(2+)(in) + H(+)(out) = Cd(2+)(out) + H(+)(in). The enzyme catalyses Fe(2+)(in) + H(+)(out) = Fe(2+)(out) + H(+)(in). Its function is as follows. Divalent metal cation transporter which exports Zn(2+), Cd(2+) and possibly Fe(2+). May be involved in zinc and iron detoxification by efflux. The sequence is that of Cation-efflux pump FieF from Salmonella arizonae (strain ATCC BAA-731 / CDC346-86 / RSK2980).